A 436-amino-acid chain; its full sequence is MTKPIVAIVGRPNVGKSTIFNRIVGERVSIVEDTPGVTRDRIYSSGEWLTHDFNIIDTGGIEIGDAPFQTQIRAQAEIAIDEADVIIFMVNVREGLTQSDEMVAQILYKSKKPVVLAVNKVDNMEMRTDVYDFYSLGFGEPYPISGSHGLGLGDLLDAVVSHFGEEEEDPYDEDTIRLSIIGRPNVGKSSLVNAILGEDRVIVSNVAGTTRDAIDTEYSYDGQDYVLIDTAGMRKKGKVYESTEKYSVLRALKAIERSNVVLVVIDAEQGIIEQDKRVAGYAHEQGKAVVIVVNKWDTVEKDSKTMKKFEDEVRKEFQFLDYAQIAFVSAKERTRLRTLFPYINEASENHKKRVQSSTLNEVVTDAISMNPTPTDKGRRLNVFYATQVAIEPPTFVVFVNDVELMHFSYKRYLENQIRAAFGFEGTPIHIIARKRN.

2 consecutive EngA-type G domains span residues 4-167 (PIVA…GEEE) and 176-351 (IRLS…ENHK). GTP contacts are provided by residues 10–17 (GRPNVGKS), 57–61 (DTGGI), 119–122 (NKVD), 182–189 (GRPNVGKS), 229–233 (DTAGM), and 294–297 (NKWD). One can recognise a KH-like domain in the interval 352 to 436 (KRVQSSTLNE…PIHIIARKRN (85 aa)).

This sequence belongs to the TRAFAC class TrmE-Era-EngA-EngB-Septin-like GTPase superfamily. EngA (Der) GTPase family. Associates with the 50S ribosomal subunit.

Functionally, GTPase that plays an essential role in the late steps of ribosome biogenesis. In Staphylococcus aureus (strain Mu3 / ATCC 700698), this protein is GTPase Der.